The following is a 162-amino-acid chain: MNPRRKKRLTLAVALIGGVAAITSLLLYALNSNLNLFYTPSEIVHGKTDTGVKPEIGQRIRVGGMVTVGSMVRDPKSLHVQFAVHDSLGGEVLVTYDDLLPDLFREGQGIVAQGVLSADGKLEATEVLAKHDENYMPPEVAEAMGQKHEKLDYSQQKAPDTK.

Residues 1-8 (MNPRRKKR) are Cytoplasmic-facing. Residues 9 to 29 (LTLAVALIGGVAAITSLLLYA) form a helical; Signal-anchor for type II membrane protein membrane-spanning segment. Topologically, residues 30–162 (LNSNLNLFYT…YSQQKAPDTK (133 aa)) are periplasmic. Heme contacts are provided by His-131 and Tyr-135. Residues 142 to 162 (EAMGQKHEKLDYSQQKAPDTK) form a disordered region. Residues 153-162 (YSQQKAPDTK) are compositionally biased toward polar residues.

It belongs to the CcmE/CycJ family.

Its subcellular location is the cell inner membrane. Heme chaperone required for the biogenesis of c-type cytochromes. Transiently binds heme delivered by CcmC and transfers the heme to apo-cytochromes in a process facilitated by CcmF and CcmH. The protein is Cytochrome c-type biogenesis protein CcmE of Shewanella baltica (strain OS223).